Consider the following 232-residue polypeptide: Fibrillarin-like rRNA/tRNA 2'-O-methyltransferase (232 aa).

S-adenosyl-L-methionine contacts are provided by residues 87–88 (TT), 105–106 (EF), 130–131 (DA), and 150–153 (DVAQ).

Belongs to the methyltransferase superfamily. Fibrillarin family. In terms of assembly, interacts with nop5. Component of box C/D small ribonucleoprotein (sRNP) particles that contain rpl7ae, FlpA and nop5, plus a guide RNA.

Its function is as follows. Involved in pre-rRNA and tRNA processing. Utilizes the methyl donor S-adenosyl-L-methionine to catalyze the site-specific 2'-hydroxyl methylation of ribose moieties in rRNA and tRNA. Site specificity is provided by a guide RNA that base pairs with the substrate. Methylation occurs at a characteristic distance from the sequence involved in base pairing with the guide RNA. The chain is Fibrillarin-like rRNA/tRNA 2'-O-methyltransferase from Methanococcus maripaludis (strain C7 / ATCC BAA-1331).